The primary structure comprises 70 residues: Protein SlyX homolog (70 aa).

This sequence belongs to the SlyX family.

The sequence is that of Protein SlyX homolog from Shewanella frigidimarina (strain NCIMB 400).